The following is a 551-amino-acid chain: E3 ubiquitin-protein ligase HEL1 (551 aa).

The interval 175-388 is TRIAD supradomain; it reads NDFTCIICCD…KNFFQCTMYK (214 aa). Cys179, Cys182, Cys200, Cys203, Cys301, Cys304, His309, Cys314, Cys341, and Cys344 together coordinate Zn(2+). The RING-type 1 zinc finger occupies 179–225; sequence CIICCDKKDTETFALECGHEYCINCYRHYIKDKLHEGNIITCMDCSL. The IBR-type zinc-finger motif lies at 242–314; the sequence is SKLMDSSIKS…GFEVHSPADC (73 aa). Residues 341 to 370 form an RING-type 2; atypical zinc finger; the sequence is CPKCSVNIEKNGGCNHMVCSSCKYEFCWIC. The active site involves Cys354. Cys359, Cys362, Cys367, Cys370, His377, and Cys384 together coordinate Zn(2+).

Belongs to the RBR family. Interacts with the E2 ubiquitin-conjugating enzyme UBC4 and histones H3 and H4.

It catalyses the reaction [E2 ubiquitin-conjugating enzyme]-S-ubiquitinyl-L-cysteine + [acceptor protein]-L-lysine = [E2 ubiquitin-conjugating enzyme]-L-cysteine + [acceptor protein]-N(6)-ubiquitinyl-L-lysine.. It functions in the pathway protein modification; protein ubiquitination. In terms of biological role, probable ubiquitin-protein ligase involved in the degradation-related ubiquitination of histones. Contributes to the post-translational regulation of histone protein levels by polyubiquitination of excess histones for subsequent degradation. This chain is E3 ubiquitin-protein ligase HEL1, found in Saccharomyces cerevisiae (strain ATCC 204508 / S288c) (Baker's yeast).